A 131-amino-acid chain; its full sequence is Glycine cleavage system H protein (131 aa).

The 83-residue stretch at 24–106 folds into the Lipoyl-binding domain; it reads TVRVGITDYA…YGEGWLVELQ (83 aa). An N6-lipoyllysine modification is found at Lys65.

The protein belongs to the GcvH family. The glycine cleavage system is composed of four proteins: P, T, L and H. (R)-lipoate serves as cofactor.

The glycine cleavage system catalyzes the degradation of glycine. The H protein shuttles the methylamine group of glycine from the P protein to the T protein. The sequence is that of Glycine cleavage system H protein from Mycolicibacterium gilvum (strain PYR-GCK) (Mycobacterium gilvum (strain PYR-GCK)).